We begin with the raw amino-acid sequence, 767 residues long: uncharacterized protein (767 aa).

3 disordered regions span residues 171–209 (LPVW…LRTP), 314–340 (ETEA…CQEE), and 533–566 (RDHG…PRGF). Composition is skewed to basic and acidic residues over residues 322–331 (PDPRPEKDAK) and 552–564 (ETKD…RDPR).

This is an uncharacterized protein from Homo sapiens (Human).